Here is a 320-residue protein sequence, read N- to C-terminus: Malate dehydrogenase (320 aa).

Residues 10-15 and Asp34 each bind NAD(+); that span reads GAGNIG. 2 residues coordinate substrate: Arg83 and Arg89. Residues Asn96 and 119-121 contribute to the NAD(+) site; that span reads ITN. The substrate site is built by Asn121 and Arg152. The active-site Proton acceptor is the His176.

This sequence belongs to the LDH/MDH superfamily. MDH type 3 family.

It carries out the reaction (S)-malate + NAD(+) = oxaloacetate + NADH + H(+). In terms of biological role, catalyzes the reversible oxidation of malate to oxaloacetate. This is Malate dehydrogenase from Novosphingobium aromaticivorans (strain ATCC 700278 / DSM 12444 / CCUG 56034 / CIP 105152 / NBRC 16084 / F199).